The primary structure comprises 385 residues: Protein pelota homolog (385 aa).

It belongs to the eukaryotic release factor 1 family. Pelota subfamily. As to quaternary structure, component of the Pelota-HBS1L complex, also named Dom34-Hbs1 complex, composed of PELO and HBS1L. The cofactor is a divalent metal cation.

The protein resides in the cytoplasm. Functionally, component of the Pelota-HBS1L complex, a complex that recognizes stalled ribosomes and triggers the No-Go Decay (NGD) pathway. In the Pelota-HBS1L complex, PELO recognizes ribosomes stalled at the 3' end of an mRNA and engages stalled ribosomes by destabilizing mRNA in the mRNA channel. Following mRNA extraction from stalled ribosomes by the SKI complex, the Pelota-HBS1L complex promotes recruitment of ABCE1, which drives the disassembly of stalled ribosomes, followed by degradation of damaged mRNAs as part of the NGD pathway. The protein is Protein pelota homolog (pelo) of Danio rerio (Zebrafish).